We begin with the raw amino-acid sequence, 67 residues long: Large ribosomal subunit protein bL35 (67 aa).

The protein belongs to the bacterial ribosomal protein bL35 family.

In Rickettsia prowazekii (strain Madrid E), this protein is Large ribosomal subunit protein bL35.